The following is a 145-amino-acid chain: NADH-ubiquinone oxidoreductase subunit 8 (145 aa).

4Fe-4S ferredoxin-type domains are found at residues 43–73 (LRFY…VRVG) and 83–112 (DWFT…HSLF). Cys53, Cys56, Cys59, Cys63, Cys92, Cys95, Cys98, and Cys102 together coordinate [4Fe-4S] cluster.

It belongs to the complex I 23 kDa subunit family. It depends on [4Fe-4S] cluster as a cofactor.

The protein resides in the mitochondrion. The catalysed reaction is a ubiquinone + NADH + 5 H(+)(in) = a ubiquinol + NAD(+) + 4 H(+)(out). Its function is as follows. Core subunit of the mitochondrial membrane respiratory chain NADH dehydrogenase (Complex I) that is believed to belong to the minimal assembly required for catalysis. Complex I functions in the transfer of electrons from NADH to the respiratory chain. The immediate electron acceptor for the enzyme is believed to be ubiquinone. May donate electrons to ubiquinone. The sequence is that of NADH-ubiquinone oxidoreductase subunit 8 (M-ISP1) from Trypanosoma brucei brucei.